A 306-amino-acid polypeptide reads, in one-letter code: tRNA pseudouridine synthase B (306 aa).

The Nucleophile role is filled by D51.

It belongs to the pseudouridine synthase TruB family. Type 1 subfamily.

It catalyses the reaction uridine(55) in tRNA = pseudouridine(55) in tRNA. Functionally, responsible for synthesis of pseudouridine from uracil-55 in the psi GC loop of transfer RNAs. The polypeptide is tRNA pseudouridine synthase B (Nocardia farcinica (strain IFM 10152)).